The sequence spans 111 residues: Thiosulfate sulfurtransferase GlpE (111 aa).

The Rhodanese domain maps to 16-104; it reads QTENAVLLDV…WQRAGLPMET (89 aa). The active-site Cysteine persulfide intermediate is Cys-64.

It belongs to the GlpE family.

The protein localises to the cytoplasm. The enzyme catalyses thiosulfate + hydrogen cyanide = thiocyanate + sulfite + 2 H(+). The catalysed reaction is thiosulfate + [thioredoxin]-dithiol = [thioredoxin]-disulfide + hydrogen sulfide + sulfite + 2 H(+). Functionally, transferase that catalyzes the transfer of sulfur from thiosulfate to thiophilic acceptors such as cyanide or dithiols. May function in a CysM-independent thiosulfate assimilation pathway by catalyzing the conversion of thiosulfate to sulfite, which can then be used for L-cysteine biosynthesis. The protein is Thiosulfate sulfurtransferase GlpE of Actinobacillus succinogenes (strain ATCC 55618 / DSM 22257 / CCUG 43843 / 130Z).